Reading from the N-terminus, the 347-residue chain is Cytosolic sulfotransferase 14 (347 aa).

87-92 provides a ligand contact to 3'-phosphoadenylyl sulfate; it reads KSGTTW. Residue H155 is the Proton acceptor of the active site. Residues R177, S185, Y244, and 310 to 312 contribute to the 3'-phosphoadenylyl sulfate site; that span reads RKG.

This sequence belongs to the sulfotransferase 1 family.

The protein resides in the cytoplasm. Its function is as follows. Sulfotransferase that utilizes 3'-phospho-5'-adenylyl sulfate (PAPS) as sulfonate donor. Not active with 11-hydroxyjasmonate or 12-hydroxyjasmonate. The sequence is that of Cytosolic sulfotransferase 14 (SOT14) from Arabidopsis thaliana (Mouse-ear cress).